The primary structure comprises 171 residues: Co-chaperone protein HscB (171 aa).

The J domain maps to D2 to L74.

The protein belongs to the HscB family. As to quaternary structure, interacts with HscA and stimulates its ATPase activity. Interacts with IscU.

Co-chaperone involved in the maturation of iron-sulfur cluster-containing proteins. Seems to help targeting proteins to be folded toward HscA. This is Co-chaperone protein HscB from Salmonella schwarzengrund (strain CVM19633).